Reading from the N-terminus, the 257-residue chain is Snake venom serine protease CL5 (257 aa).

Residues 1-18 (MVLIRVLANLLILQLSYA) form the signal peptide. Residues 19-24 (QRSSEL) constitute a propeptide that is removed on maturation. The Peptidase S1 domain occupies 25–248 (VIGGDECNIN…HLDWIQSIIA (224 aa)). Intrachain disulfides connect Cys31–Cys162, Cys49–Cys65, Cys141–Cys209, Cys173–Cys188, and Cys199–Cys224. The Charge relay system role is filled by His64. N-linked (GlcNAc...) asparagine glycans are attached at residues Asn78 and Asn102. The active-site Charge relay system is the Asp109. 2 N-linked (GlcNAc...) asparagine glycosylation sites follow: Asn153 and Asn169. Ser203 serves as the catalytic Charge relay system. Asn250 carries an N-linked (GlcNAc...) asparagine glycan.

Belongs to the peptidase S1 family. Snake venom subfamily. In terms of assembly, monomer. As to expression, expressed by the venom gland.

The protein resides in the secreted. Its function is as follows. Snake venom serine protease that may act in the hemostasis system of the prey. In Trimeresurus stejnegeri (Chinese green tree viper), this protein is Snake venom serine protease CL5.